The sequence spans 720 residues: Inactive serine protease PAMR1 (720 aa).

The signal sequence occupies residues methionine 1–serine 21. Disulfide bonds link cysteine 128/cysteine 150, cysteine 177/cysteine 199, cysteine 239/cysteine 250, cysteine 244/cysteine 260, cysteine 262/cysteine 271, cysteine 280/cysteine 329, cysteine 315/cysteine 342, and cysteine 414/cysteine 442. The CUB domain maps to cysteine 128–isoleucine 236. An EGF-like domain is found at glutamate 235–glutamate 272. 2 Sushi domains span residues arginine 278 to lysine 344 and alanine 387 to proline 444. Residues isoleucine 445–lysine 720 form the Peptidase S1 domain. N-linked (GlcNAc...) asparagine glycosylation is present at asparagine 451. Cysteine 489 and cysteine 505 are joined by a disulfide. A glycan (N-linked (GlcNAc...) asparagine) is linked at asparagine 614. 2 disulfide bridges follow: cysteine 630/cysteine 649 and cysteine 661/cysteine 697.

The protein belongs to the peptidase S1 family.

It is found in the secreted. May play a role in regeneration of skeletal muscle. In Pongo abelii (Sumatran orangutan), this protein is Inactive serine protease PAMR1 (PAMR1).